Here is a 238-residue protein sequence, read N- to C-terminus: Single-stranded DNA-binding protein WHY2, mitochondrial (238 aa).

A mitochondrion-targeting transit peptide spans 1-29 (MMKQARSLLSRSLCDQSKSLFEASTLRGF). Residues 62–67 (KGKAAL) are required for ssDNA binding.

It belongs to the Whirly family. Homotetramer.

It is found in the mitochondrion. In terms of biological role, single-stranded DNA-binding protein that associates with mitochondrial DNA and may play a role in the regulation of the gene expression machinery. Also seems to be required to prevent break-induced DNA rearrangements in the mitochondrial genome. Can bind to melt double-stranded DNA in vivo. The chain is Single-stranded DNA-binding protein WHY2, mitochondrial (WHY2) from Arabidopsis thaliana (Mouse-ear cress).